The sequence spans 341 residues: Putative amino-acid ABC transporter-binding protein YhdW (341 aa).

Positions 1 to 19 are cleaved as a signal peptide; sequence MKKMMIATLAAASVLLAVA.

The protein belongs to the bacterial solute-binding protein 3 family.

The protein resides in the periplasm. Probably part of the binding-protein-dependent transport system YdhWXYZ for an amino acid. This chain is Putative amino-acid ABC transporter-binding protein YhdW (yhdW), found in Escherichia coli (strain K12).